The primary structure comprises 443 residues: GPI mannosyltransferase 1 (443 aa).

Helical transmembrane passes span 8 to 28 (PFMV…YGAW), 68 to 88 (PLLA…FSFG), 90 to 110 (ALFA…LTLT), 136 to 156 (TRGS…WAVL), 160 to 180 (IYLG…PFIY), 232 to 252 (LTLI…LHYG), 273 to 291 (FSPY…AGAV), 302 to 322 (FESL…PLVL), 347 to 367 (SQYF…SSLL), 374 to 394 (IAVA…GYLL), and 406 to 426 (LFLA…VIVA).

It belongs to the PIGM family.

It is found in the endoplasmic reticulum membrane. The protein operates within glycolipid biosynthesis; glycosylphosphatidylinositol-anchor biosynthesis. Functionally, mannosyltransferase involved in glycosylphosphatidylinositol-anchor biosynthesis. Transfers the first alpha-1,4-mannose to GlcN-acyl-PI during GPI precursor assembly. Required for cell wall integrity. This Emericella nidulans (strain FGSC A4 / ATCC 38163 / CBS 112.46 / NRRL 194 / M139) (Aspergillus nidulans) protein is GPI mannosyltransferase 1 (gpi14).